The primary structure comprises 125 residues: Small ribosomal subunit protein eS8 (125 aa).

The protein belongs to the eukaryotic ribosomal protein eS8 family. In terms of assembly, part of the 30S ribosomal subunit.

In Methanocorpusculum labreanum (strain ATCC 43576 / DSM 4855 / Z), this protein is Small ribosomal subunit protein eS8.